The sequence spans 257 residues: Thiazole synthase (257 aa).

Catalysis depends on lysine 98, which acts as the Schiff-base intermediate with DXP. 1-deoxy-D-xylulose 5-phosphate contacts are provided by residues glycine 159, 185 to 186, and 207 to 208; these read AG and NT.

This sequence belongs to the ThiG family. Homotetramer. Forms heterodimers with either ThiH or ThiS.

The protein localises to the cytoplasm. The enzyme catalyses [ThiS sulfur-carrier protein]-C-terminal-Gly-aminoethanethioate + 2-iminoacetate + 1-deoxy-D-xylulose 5-phosphate = [ThiS sulfur-carrier protein]-C-terminal Gly-Gly + 2-[(2R,5Z)-2-carboxy-4-methylthiazol-5(2H)-ylidene]ethyl phosphate + 2 H2O + H(+). It functions in the pathway cofactor biosynthesis; thiamine diphosphate biosynthesis. Functionally, catalyzes the rearrangement of 1-deoxy-D-xylulose 5-phosphate (DXP) to produce the thiazole phosphate moiety of thiamine. Sulfur is provided by the thiocarboxylate moiety of the carrier protein ThiS. In vitro, sulfur can be provided by H(2)S. The polypeptide is Thiazole synthase (Anaeromyxobacter sp. (strain Fw109-5)).